Here is an 807-residue protein sequence, read N- to C-terminus: FAD-linked oxidoreductase pytB (807 aa).

The first 18 residues, 1-18 (MRFLGIAAVATFSTVVSA), serve as a signal peptide directing secretion. N-linked (GlcNAc...) asparagine glycosylation is found at asparagine 45, asparagine 106, asparagine 120, asparagine 242, asparagine 295, asparagine 351, asparagine 419, and asparagine 699. The region spanning 60–231 (FDELPVLLAY…VEFTLSLTSI (172 aa)) is the FAD-binding PCMH-type domain.

This sequence belongs to the oxygen-dependent FAD-linked oxidoreductase family. It depends on FAD as a cofactor.

It participates in secondary metabolite biosynthesis. In terms of biological role, FAD-linked oxidoreductase; part of the gene cluster that mediates the biosynthesis of pyranterreones, a family of antioxidative compounds. The first step of pyranonigrins biosynthesis is performed by the hybrid PKS-NRPS synthetase pytA that condenses 4 malonyl-CoA units ato the acetyl starter unit by the modular PKS of pytA. The acyl chain is then connected to an L-serine through the amide bond by the modular NRPS of pytA. A tetramic acid is formed and released from the PKS-NRPS pytA to give pyranterreone 5 with the help of the thioesterase pytI. Pyranterreone 5 could be methylated by pytC to afford pyranterreone 6. Both pyranterreones 5 and 6 are subsequently oxidized by the FAD-linked oxidoreductase pytB and the cytochrome P450 monooxygenase pytD to form the fused gamma-pyrone core, resulting in pyranterreones 7 and 11, respectively. The hydroxy group at C-8 of pyranterreones 7 and 11 are dehydrated by the aspartyl protease pytH to form a delta-7 double bond to give pyranterreones 3 and 1, 2 accordingly. The exo-methylene of pyranterreone 3 could be reduced into a pendant methyl by reductase pytE to provide pyranterreone 4, also known as cordylactam. Pyranterreone 4 can be reconverted to pyranterreone 3 through pytB-catalyzed dehydrogenation or further oxidized to pyranterreones 9 and 10. The polypeptide is FAD-linked oxidoreductase pytB (Aspergillus terreus (strain NIH 2624 / FGSC A1156)).